The chain runs to 443 residues: MSTDSIEVAIIGAGITGITLALGLLSRGIPVRVYERARDFHEIGAGIGFTPNAEWAMKVVDPRIQAAFKRVATPNASDWFQWVDGFNESGTDPRETEEQLLFKIYLGERGFEGCHRADFLGELARLLPEGVVTFQKALDTVEPAADNSLGQLLRFQDGTTATAHAVIGCDGIRSRVRQILLGEDHPAASAHYSHKYAARGLIPMDRAREALGEDKVATRFMHLGPDAHALTFPVSHGSLLNVVAFVTDPNPWPYADRWTAQGPKEDVTAAFSRFGPTMRTIIDLLPDPIDQWAVFDTYDHPPNTYSRGAVCIAGDAAHAAAPHHGAGAGCGVEDAAVLCAVLDMAAKRVDTAKDGTEGKAALITTAFETYDAVRRERAQWLVESSRVIGNLYEWQDKEVGSDASRCHDEVYWRSHRIWDYDIDAMMRETAEVFEARVAGVAKN.

The chain crosses the membrane as a helical span at residues 5–25 (SIEVAIIGAGITGITLALGLL). Residues E35 and G48 each coordinate FAD. Residues N75 and N87 are each glycosylated (N-linked (GlcNAc...) asparagine). R116 serves as a coordination point for FAD. R199 is a catalytic residue. The FAD site is built by D315 and A328.

This sequence belongs to the paxM FAD-dependent monooxygenase family. FAD is required as a cofactor.

The protein resides in the membrane. Its pathway is secondary metabolite biosynthesis. Functionally, FAD-dependent monooxygenase; part of the gene cluster that mediates the biosynthesis of nigerpyrone and its derivatives carbonarone A and pestalamide A. The biosynthesis pathway begins with the polyketide assembly by epaA to form phenylacetyl triketide precursor from successive condensation of two malonyl-CoA, presumably with one phenylacetyl-CoA starter unit produced by the phenylacetyl-CoA ligase epaB. For the nigerpyrone biosynthesis, the reactive polyketide chain is released as an aldehyde through the R-domain. A nonenzymatic cyclization and dehydration may create nigerpyrone. For the biosynthesis of carbonarone A and pestalamide A, an extra methyl group is added through the C-methyltransferase domain. Several further steps involving the dehydrogenase orf1, the cytochrome P450 monooxygenase orf2 and the FAD-dependent monooxygenase orf3 are required to form a carbonarone A precursor which is converted to carbonarone A via cyclization. The O-acetyltransferase epaC could catalyze the transfer of 2-methylsuccinyl-CoA, a common intermediate in the ethylmalonyl-CoA pathway, to generate the final product pestalamide A. This is FAD-dependent monooxygenase orf3 from Aspergillus niger (strain ATCC MYA-4892 / CBS 513.88 / FGSC A1513).